Here is a 165-residue protein sequence, read N- to C-terminus: Phosphopantetheine adenylyltransferase (165 aa).

S9 is a binding site for substrate. ATP contacts are provided by residues 9–10 (SF) and H17. Substrate is bound by residues K41, L73, and K87. ATP-binding positions include 88-90 (GLR), E98, and 122-128 (YSFLSSS).

Belongs to the bacterial CoaD family. Homohexamer. It depends on Mg(2+) as a cofactor.

The protein resides in the cytoplasm. It catalyses the reaction (R)-4'-phosphopantetheine + ATP + H(+) = 3'-dephospho-CoA + diphosphate. It participates in cofactor biosynthesis; coenzyme A biosynthesis; CoA from (R)-pantothenate: step 4/5. Its function is as follows. Reversibly transfers an adenylyl group from ATP to 4'-phosphopantetheine, yielding dephospho-CoA (dPCoA) and pyrophosphate. The polypeptide is Phosphopantetheine adenylyltransferase (Acidothermus cellulolyticus (strain ATCC 43068 / DSM 8971 / 11B)).